Here is a 338-residue protein sequence, read N- to C-terminus: D-erythrose-4-phosphate dehydrogenase (338 aa).

11-12 (RI) lines the NAD(+) pocket. Substrate-binding positions include 153 to 155 (SCT), arginine 199, 212 to 213 (TK), and arginine 235. Cysteine 154 (nucleophile) is an active-site residue. Asparagine 317 serves as a coordination point for NAD(+).

This sequence belongs to the glyceraldehyde-3-phosphate dehydrogenase family. Epd subfamily. Homotetramer.

The protein localises to the cytoplasm. It carries out the reaction D-erythrose 4-phosphate + NAD(+) + H2O = 4-phospho-D-erythronate + NADH + 2 H(+). It functions in the pathway cofactor biosynthesis; pyridoxine 5'-phosphate biosynthesis; pyridoxine 5'-phosphate from D-erythrose 4-phosphate: step 1/5. Functionally, catalyzes the NAD-dependent conversion of D-erythrose 4-phosphate to 4-phosphoerythronate. This is D-erythrose-4-phosphate dehydrogenase from Shewanella piezotolerans (strain WP3 / JCM 13877).